We begin with the raw amino-acid sequence, 368 residues long: Methionine import ATP-binding protein MetN (368 aa).

Residues 5–260 (IELNNLSVQF…PKEALTKQFI (256 aa)) form the ABC transporter domain. ATP is bound at residue 41–48 (GYSGAGKS).

It belongs to the ABC transporter superfamily. Methionine importer (TC 3.A.1.24) family. The complex is composed of two ATP-binding proteins (MetN), two transmembrane proteins (MetI) and a solute-binding protein (MetQ).

It localises to the cell membrane. The enzyme catalyses L-methionine(out) + ATP + H2O = L-methionine(in) + ADP + phosphate + H(+). The catalysed reaction is D-methionine(out) + ATP + H2O = D-methionine(in) + ADP + phosphate + H(+). Its function is as follows. Part of the ABC transporter complex MetNIQ involved in methionine import. Responsible for energy coupling to the transport system. This Lactococcus lactis subsp. lactis (strain IL1403) (Streptococcus lactis) protein is Methionine import ATP-binding protein MetN.